The primary structure comprises 143 residues: Transcriptional regulator MraZ (143 aa).

SpoVT-AbrB domains lie at 5-47 (EYHH…PMQG) and 76-119 (ATEC…SRSR).

This sequence belongs to the MraZ family. Forms oligomers.

It localises to the cytoplasm. Its subcellular location is the nucleoid. The chain is Transcriptional regulator MraZ from Moorella thermoacetica (strain ATCC 39073 / JCM 9320).